Here is a 273-residue protein sequence, read N- to C-terminus: Ribosomal RNA small subunit methyltransferase A (273 aa).

S-adenosyl-L-methionine-binding residues include Asn18, Leu20, Gly45, Glu66, Asp91, and Asn113.

Belongs to the class I-like SAM-binding methyltransferase superfamily. rRNA adenine N(6)-methyltransferase family. RsmA subfamily.

It is found in the cytoplasm. The catalysed reaction is adenosine(1518)/adenosine(1519) in 16S rRNA + 4 S-adenosyl-L-methionine = N(6)-dimethyladenosine(1518)/N(6)-dimethyladenosine(1519) in 16S rRNA + 4 S-adenosyl-L-homocysteine + 4 H(+). In terms of biological role, specifically dimethylates two adjacent adenosines (A1518 and A1519) in the loop of a conserved hairpin near the 3'-end of 16S rRNA in the 30S particle. May play a critical role in biogenesis of 30S subunits. In Citrobacter koseri (strain ATCC BAA-895 / CDC 4225-83 / SGSC4696), this protein is Ribosomal RNA small subunit methyltransferase A.